The sequence spans 477 residues: Aspartyl/glutamyl-tRNA(Asn/Gln) amidotransferase subunit B (477 aa).

It belongs to the GatB/GatE family. GatB subfamily. Heterotrimer of A, B and C subunits.

The enzyme catalyses L-glutamyl-tRNA(Gln) + L-glutamine + ATP + H2O = L-glutaminyl-tRNA(Gln) + L-glutamate + ADP + phosphate + H(+). It catalyses the reaction L-aspartyl-tRNA(Asn) + L-glutamine + ATP + H2O = L-asparaginyl-tRNA(Asn) + L-glutamate + ADP + phosphate + 2 H(+). Its function is as follows. Allows the formation of correctly charged Asn-tRNA(Asn) or Gln-tRNA(Gln) through the transamidation of misacylated Asp-tRNA(Asn) or Glu-tRNA(Gln) in organisms which lack either or both of asparaginyl-tRNA or glutaminyl-tRNA synthetases. The reaction takes place in the presence of glutamine and ATP through an activated phospho-Asp-tRNA(Asn) or phospho-Glu-tRNA(Gln). This is Aspartyl/glutamyl-tRNA(Asn/Gln) amidotransferase subunit B from Legionella pneumophila (strain Paris).